Reading from the N-terminus, the 590-residue chain is MSSRKVRVKKLNVKTTLPVLREDQIDPNEYEALTTDNQIATGVEQAEENEYHLQTILKEAGTSNDQEIPVPPPQESDINYDDLYPVPFHKPSSYIRFSQTVEECITCLYDMTTEDDEFLKQYNSKPPATGVLSEDDFEHIMEVFEDTAAEQTPFAAVDNTVAAYDMMLPGLTHLNQSVSTDVLQHAKPVYEYWKSRRQEAGNKPLHPSLKFETHQETDDTDPFVCFRRREARQTRKTRARDNKIAETLKKLRRELEDGRQLVLLAYEREMVKREVMSMDRAIFEERARLKDMKLRLGIKGEDEDLVNQKPQKRKPVEPPVVRQPTGAHLRQPVRSDGRTLDADLVLLSDKLAEKETELRLDIEMKVQNHRKWNQNHIDLTREPLSPVKEQGTEVKFRQAKTQYLMTPPASTSSEMEVDEIAPDAMQLDKRESSVFQFTAGSGEQSKGSQPAFRRRIGRLNRLWIDRRGMVTPPRELGEDRSDRWKYDSDSDDEEPPVYEVDPFDTRALKFRATIPLNPYMFRGRPAVPPEAVAAAQAQAGNRVLPSPAAAAAHAHAQAHAQAAAAAHLAAQAQAKAQAVAQQQAQAAQGV.

Disordered regions lie at residues aspartate 302 to serine 335 and threonine 471 to valine 497. Basic and acidic residues predominate over residues glutamate 475–serine 488.

It belongs to the enhancer of polycomb family. As to quaternary structure, component of the NuA4 histone acetyltransferase complex.

The protein resides in the nucleus. Functionally, component of the NuA4 histone acetyltransferase complex which is involved in transcriptional activation of selected genes principally by acetylation of nucleosomal histone H4 and H2A. The NuA4 complex is also involved in DNA repair. Involved in gene silencing by neighboring heterochromatin, blockage of the silencing spreading along the chromosome, and required for cell cycle progression through G2/M. This chain is Enhancer of polycomb-like protein 1 (EPL1), found in Gibberella zeae (strain ATCC MYA-4620 / CBS 123657 / FGSC 9075 / NRRL 31084 / PH-1) (Wheat head blight fungus).